A 389-amino-acid chain; its full sequence is Lipopolysaccharide assembly protein B (389 aa).

A helical membrane pass occupies residues 1–20; the sequence is MLELLFLLLPVAAAYGWYMG. Residues 21–389 lie on the Cytoplasmic side of the membrane; the sequence is RRSAQQNKQD…IKPIRGLDGL (369 aa). TPR repeat units lie at residues 35-68, 69-102, 107-140, 142-174, 180-213, 214-247, and 249-282; these read LSRD…DTGT, VEAH…ASLT, LLAI…TDFR, GALQ…GKDK, AHFY…DKNS, ARVS…DREL, and SETL…NTGA. Residues Cys357, Cys360, Cys371, and Cys374 each coordinate Fe cation.

It belongs to the LapB family.

It is found in the cell inner membrane. Modulates cellular lipopolysaccharide (LPS) levels by regulating LpxC, which is involved in lipid A biosynthesis. May act by modulating the proteolytic activity of FtsH towards LpxC. May also coordinate assembly of proteins involved in LPS synthesis at the plasma membrane. The chain is Lipopolysaccharide assembly protein B from Escherichia coli O157:H7.